Consider the following 597-residue polypeptide: Arginine--tRNA ligase (597 aa).

A 'HIGH' region motif is present at residues 125-135 (PNTNKPLHLGH).

This sequence belongs to the class-I aminoacyl-tRNA synthetase family. In terms of assembly, monomer.

Its subcellular location is the cytoplasm. It carries out the reaction tRNA(Arg) + L-arginine + ATP = L-arginyl-tRNA(Arg) + AMP + diphosphate. In Bacteroides fragilis (strain ATCC 25285 / DSM 2151 / CCUG 4856 / JCM 11019 / LMG 10263 / NCTC 9343 / Onslow / VPI 2553 / EN-2), this protein is Arginine--tRNA ligase.